The primary structure comprises 154 residues: MSASVELSSYRDQHFKGSRSEQERSLRGSCTLYVGNLSFYTTEEQIHELFSRCGDVRVIVMGLDKYKKTPCGFCFVEYYVRAEAEAAMRFVNGTRLDDRLIRVDWDAGFIEGRQYGRGKTGGQVRDEYRTDYDAGRGGYGKLLSQKIAPNTDNR.

Residues Tyr-10, Tyr-33, 102 to 106, 113 to 117, and 123 to 124 contribute to the mRNA site; these read RVDWD, RQYGR, and QV. Residues 30–108 form the RRM domain; that stretch reads CTLYVGNLSF…RLIRVDWDAG (79 aa).

Belongs to the RRM NCBP2 family. Component of the nuclear cap-binding complex (CBC), a heterodimer composed of Cbp80 and Cbp20 that interacts with m7GpppG-capped RNA. Interacts with Ars2.

The protein localises to the nucleus. Component of the cap-binding complex (CBC), which binds co-transcriptionally to the 5' cap of pre-mRNAs and is involved in various processes such as pre-mRNA splicing and RNA-mediated gene silencing (RNAi). The CBC complex is involved in miRNA-mediated RNA interference via its interaction with Ars2 and is required for primary microRNAs (miRNAs) processing. Also involved in innate immunity via the short interfering RNAs (siRNAs) processing machinery by restricting the viral RNA production. In the CBC complex, Cbp20 recognizes and binds capped RNAs (m7GpppG-capped RNA) but requires Cbp80 to stabilize the movement of its N-terminal loop and lock the CBC into a high affinity cap-binding state with the cap structure. This Drosophila erecta (Fruit fly) protein is Nuclear cap-binding protein subunit 2 (Cbp20).